The chain runs to 162 residues: NADH-quinone oxidoreductase subunit I (162 aa).

2 4Fe-4S ferredoxin-type domains span residues 52–82 (LRRYPNGEERCIACKLCEAVCPAQAITIEAG) and 93–122 (VRYDIDMVKCIYCGLCQEACPVDAIVEGPN). [4Fe-4S] cluster-binding residues include C62, C65, C68, C72, C102, C105, C108, and C112.

It belongs to the complex I 23 kDa subunit family. As to quaternary structure, NDH-1 is composed of 14 different subunits. Subunits NuoA, H, J, K, L, M, N constitute the membrane sector of the complex. The cofactor is [4Fe-4S] cluster.

It localises to the cell inner membrane. The catalysed reaction is a quinone + NADH + 5 H(+)(in) = a quinol + NAD(+) + 4 H(+)(out). Functionally, NDH-1 shuttles electrons from NADH, via FMN and iron-sulfur (Fe-S) centers, to quinones in the respiratory chain. The immediate electron acceptor for the enzyme in this species is believed to be ubiquinone. Couples the redox reaction to proton translocation (for every two electrons transferred, four hydrogen ions are translocated across the cytoplasmic membrane), and thus conserves the redox energy in a proton gradient. The polypeptide is NADH-quinone oxidoreductase subunit I (Bradyrhizobium sp. (strain BTAi1 / ATCC BAA-1182)).